Here is a 212-residue protein sequence, read N- to C-terminus: Pyridoxine/pyridoxamine 5'-phosphate oxidase (212 aa).

Substrate-binding positions include 8-11 (RRTY) and Lys66. FMN contacts are provided by residues 61 to 66 (RIVLLK), 76 to 77 (FT), Arg82, Lys83, and Gln105. Substrate is bound by residues Tyr123, Arg127, and Ser131. FMN is bound by residues 140–141 (QS) and Trp184. 190-192 (RLH) contributes to the substrate binding site. Arg194 is a binding site for FMN.

Belongs to the pyridoxamine 5'-phosphate oxidase family. As to quaternary structure, homodimer. It depends on FMN as a cofactor.

It carries out the reaction pyridoxamine 5'-phosphate + O2 + H2O = pyridoxal 5'-phosphate + H2O2 + NH4(+). The enzyme catalyses pyridoxine 5'-phosphate + O2 = pyridoxal 5'-phosphate + H2O2. It functions in the pathway cofactor metabolism; pyridoxal 5'-phosphate salvage; pyridoxal 5'-phosphate from pyridoxamine 5'-phosphate: step 1/1. Its pathway is cofactor metabolism; pyridoxal 5'-phosphate salvage; pyridoxal 5'-phosphate from pyridoxine 5'-phosphate: step 1/1. Functionally, catalyzes the oxidation of either pyridoxine 5'-phosphate (PNP) or pyridoxamine 5'-phosphate (PMP) into pyridoxal 5'-phosphate (PLP). The chain is Pyridoxine/pyridoxamine 5'-phosphate oxidase from Cupriavidus pinatubonensis (strain JMP 134 / LMG 1197) (Cupriavidus necator (strain JMP 134)).